Reading from the N-terminus, the 431-residue chain is Glutamyl-tRNA reductase (431 aa).

Substrate contacts are provided by residues 49–52 (TCDR), Ser-109, 114–116 (EPH), and Gln-120. Cys-50 functions as the Nucleophile in the catalytic mechanism. An NADP(+)-binding site is contributed by 189–194 (GTQEMG).

Belongs to the glutamyl-tRNA reductase family. As to quaternary structure, homodimer.

The catalysed reaction is (S)-4-amino-5-oxopentanoate + tRNA(Glu) + NADP(+) = L-glutamyl-tRNA(Glu) + NADPH + H(+). Its pathway is porphyrin-containing compound metabolism; protoporphyrin-IX biosynthesis; 5-aminolevulinate from L-glutamyl-tRNA(Glu): step 1/2. It functions in the pathway porphyrin-containing compound metabolism; chlorophyll biosynthesis. Its function is as follows. Catalyzes the NADPH-dependent reduction of glutamyl-tRNA(Glu) to glutamate 1-semialdehyde (GSA). This chain is Glutamyl-tRNA reductase, found in Rhodospirillum rubrum (strain ATCC 11170 / ATH 1.1.1 / DSM 467 / LMG 4362 / NCIMB 8255 / S1).